Reading from the N-terminus, the 189-residue chain is Large ribosomal subunit protein bL17 (189 aa).

This sequence belongs to the bacterial ribosomal protein bL17 family. In terms of assembly, part of the 50S ribosomal subunit. Contacts protein L32.

This is Large ribosomal subunit protein bL17 from Rhodococcus jostii (strain RHA1).